Here is a 150-residue protein sequence, read N- to C-terminus: Large ribosomal subunit protein bL9 (150 aa).

The protein belongs to the bacterial ribosomal protein bL9 family.

Its function is as follows. Binds to the 23S rRNA. The chain is Large ribosomal subunit protein bL9 from Neisseria meningitidis serogroup C (strain 053442).